An 832-amino-acid polypeptide reads, in one-letter code: Spindle pole body component alp6 (832 aa).

The interval 1–186 (MSEIHVKTAL…STETSSVQHT (186 aa)) is interaction with mzt1. A Phosphothreonine modification is found at T286.

It belongs to the TUBGCP family. In terms of assembly, part of the gamma-tubulin complex. Interacts directly with mzt1. Interacts with mto1. Interacts with mto2.

It is found in the cytoplasm. The protein resides in the cytoskeleton. The protein localises to the microtubule organizing center. It localises to the spindle pole body. Component of the gamma tubule complex that is required for the regulation of both interphase microtubules and mitotic bipolar spindles. This Schizosaccharomyces pombe (strain 972 / ATCC 24843) (Fission yeast) protein is Spindle pole body component alp6 (alp6).